The sequence spans 164 residues: Phosphopantetheine adenylyltransferase (164 aa).

Ser-9 lines the substrate pocket. ATP is bound by residues 9 to 10 and His-17; that span reads SF. Positions 41, 78, and 92 each coordinate substrate. ATP contacts are provided by residues 93–95, Glu-103, and 128–134; these read GLR and SRPITAT.

The protein belongs to the bacterial CoaD family. Homohexamer. The cofactor is Mg(2+).

The protein resides in the cytoplasm. The enzyme catalyses (R)-4'-phosphopantetheine + ATP + H(+) = 3'-dephospho-CoA + diphosphate. It participates in cofactor biosynthesis; coenzyme A biosynthesis; CoA from (R)-pantothenate: step 4/5. Functionally, reversibly transfers an adenylyl group from ATP to 4'-phosphopantetheine, yielding dephospho-CoA (dPCoA) and pyrophosphate. The sequence is that of Phosphopantetheine adenylyltransferase from Agrobacterium fabrum (strain C58 / ATCC 33970) (Agrobacterium tumefaciens (strain C58)).